Here is a 123-residue protein sequence, read N- to C-terminus: DLWEFGKMILKETGKNPFPYYGAYGCYCGWGGRGKPKDKTDDRCCFVHDCCRYKKLTGCPKTNDRYSYSWKDLTIVCGEDDPCKELCECDKAAAVCFRENLGTYNKKYRYHLRSLCKKADKPC.

Tyrosine 27, glycine 29, and glycine 31 together coordinate Ca(2+). 6 cysteine pairs are disulfide-bonded: cysteine 28-cysteine 45, cysteine 44-cysteine 96, cysteine 50-cysteine 123, cysteine 51-cysteine 89, cysteine 59-cysteine 83, and cysteine 77-cysteine 87. Histidine 48 is a catalytic residue. Position 49 (aspartate 49) interacts with Ca(2+). Residue aspartate 90 is part of the active site.

This sequence belongs to the phospholipase A2 family. Group II subfamily. D49 sub-subfamily. Monomer. The cofactor is Ca(2+). In terms of tissue distribution, expressed by the venom gland.

The protein localises to the secreted. The enzyme catalyses a 1,2-diacyl-sn-glycero-3-phosphocholine + H2O = a 1-acyl-sn-glycero-3-phosphocholine + a fatty acid + H(+). Its activity is regulated as follows. Inhibited by divalent cations different from calcium ions (cadmium, magnesium, manganese, zinc), since they act as competitive antagonists of this cofactor. In terms of biological role, snake venom phospholipase A2 (PLA2) that induces in vivo myotoxicity, moderates footpad edema, and causes in vitro neuromuscular blockade. PLA2 catalyzes the calcium-dependent hydrolysis of the 2-acyl groups in 3-sn-phosphoglycerides. The chain is Basic phospholipase A2 Ph-TX1 from Bothrocophias hyoprora (Amazonian hognose viper).